Reading from the N-terminus, the 266-residue chain is tRNA pseudouridine synthase A (266 aa).

Catalysis depends on Asp57, which acts as the Nucleophile. Tyr115 is a binding site for substrate.

This sequence belongs to the tRNA pseudouridine synthase TruA family. As to quaternary structure, homodimer.

The catalysed reaction is uridine(38/39/40) in tRNA = pseudouridine(38/39/40) in tRNA. Formation of pseudouridine at positions 38, 39 and 40 in the anticodon stem and loop of transfer RNAs. In Buchnera aphidicola subsp. Acyrthosiphon pisum (strain APS) (Acyrthosiphon pisum symbiotic bacterium), this protein is tRNA pseudouridine synthase A.